The sequence spans 594 residues: Protein HOTHEAD (594 aa).

A signal peptide spans 1-19; the sequence is MALKLFLFALLLCLPTSLS. 64–91 serves as a coordination point for FAD; sequence DYIVIGGGTAGCPLAATLSQNFSVLVLE. H529 acts as the Proton acceptor in catalysis.

Belongs to the GMC oxidoreductase family. Requires FAD as cofactor. As to expression, expressed in roots, leaves, stems, inflorescences and siliques. Found not only in epidermis but also in all sub-epidermal cell layers.

Functionally, probable FAD-dependent enzyme. Involved in regulating post-genital organ fusion. Required to limit cellular interactions between contacting epidermal cells during floral development. The sequence is that of Protein HOTHEAD (HTH) from Arabidopsis thaliana (Mouse-ear cress).